A 142-amino-acid polypeptide reads, in one-letter code: Large ribosomal subunit protein uL13 (142 aa).

Belongs to the universal ribosomal protein uL13 family. As to quaternary structure, part of the 50S ribosomal subunit.

Its function is as follows. This protein is one of the early assembly proteins of the 50S ribosomal subunit, although it is not seen to bind rRNA by itself. It is important during the early stages of 50S assembly. This Vibrio atlanticus (strain LGP32) (Vibrio splendidus (strain Mel32)) protein is Large ribosomal subunit protein uL13.